The chain runs to 225 residues: Urease accessory protein UreE (225 aa).

Basic and acidic residues-rich tracts occupy residues 189 to 202 and 212 to 225; these read HSHDFMGHSHEHEG and NSHDNEHDEHHSRR. The tract at residues 189–225 is disordered; sequence HSHDFMGHSHEHEGHRHVHNHAGNSHDNEHDEHHSRR.

Belongs to the UreE family.

It is found in the cytoplasm. Its function is as follows. Involved in urease metallocenter assembly. Binds nickel. Probably functions as a nickel donor during metallocenter assembly. This chain is Urease accessory protein UreE, found in Edwardsiella ictaluri.